Consider the following 207-residue polypeptide: Glycerol-3-phosphate acyltransferase (207 aa).

Transmembrane regions (helical) follow at residues 4–24 (VVAT…SFAV), 58–78 (ILTL…AQLL), 86–106 (DMGI…PVFH), 120–140 (ILLA…LIIA), and 162–182 (VLLF…VLLI).

It belongs to the PlsY family. In terms of assembly, probably interacts with PlsX.

Its subcellular location is the cell inner membrane. It catalyses the reaction an acyl phosphate + sn-glycerol 3-phosphate = a 1-acyl-sn-glycero-3-phosphate + phosphate. The protein operates within lipid metabolism; phospholipid metabolism. Catalyzes the transfer of an acyl group from acyl-phosphate (acyl-PO(4)) to glycerol-3-phosphate (G3P) to form lysophosphatidic acid (LPA). This enzyme utilizes acyl-phosphate as fatty acyl donor, but not acyl-CoA or acyl-ACP. This Ralstonia nicotianae (strain ATCC BAA-1114 / GMI1000) (Ralstonia solanacearum) protein is Glycerol-3-phosphate acyltransferase.